Here is a 308-residue protein sequence, read N- to C-terminus: tRNA dimethylallyltransferase (308 aa).

ATP is bound at residue 10 to 17; the sequence is GPTASGKT. 12–17 is a binding site for substrate; sequence TASGKT. 2 interaction with substrate tRNA regions span residues 35-38 and 159-163; these read DSSL and QRIFR.

This sequence belongs to the IPP transferase family. As to quaternary structure, monomer. It depends on Mg(2+) as a cofactor.

It catalyses the reaction adenosine(37) in tRNA + dimethylallyl diphosphate = N(6)-dimethylallyladenosine(37) in tRNA + diphosphate. Functionally, catalyzes the transfer of a dimethylallyl group onto the adenine at position 37 in tRNAs that read codons beginning with uridine, leading to the formation of N6-(dimethylallyl)adenosine (i(6)A). The sequence is that of tRNA dimethylallyltransferase from Francisella tularensis subsp. tularensis (strain FSC 198).